Consider the following 448-residue polypeptide: 3-phosphoshikimate 1-carboxyvinyltransferase (448 aa).

3 residues coordinate 3-phosphoshikimate: K28, S29, and R33. K28 is a binding site for phosphoenolpyruvate. Phosphoenolpyruvate is bound by residues G100 and R128. S173, Q175, D326, and K353 together coordinate 3-phosphoshikimate. Q175 lines the phosphoenolpyruvate pocket. The active-site Proton acceptor is D326. Residues R357 and R405 each contribute to the phosphoenolpyruvate site.

This sequence belongs to the EPSP synthase family. In terms of assembly, monomer.

The protein localises to the cytoplasm. The catalysed reaction is 3-phosphoshikimate + phosphoenolpyruvate = 5-O-(1-carboxyvinyl)-3-phosphoshikimate + phosphate. It participates in metabolic intermediate biosynthesis; chorismate biosynthesis; chorismate from D-erythrose 4-phosphate and phosphoenolpyruvate: step 6/7. In terms of biological role, catalyzes the transfer of the enolpyruvyl moiety of phosphoenolpyruvate (PEP) to the 5-hydroxyl of shikimate-3-phosphate (S3P) to produce enolpyruvyl shikimate-3-phosphate and inorganic phosphate. In Sinorhizobium fredii (strain NBRC 101917 / NGR234), this protein is 3-phosphoshikimate 1-carboxyvinyltransferase.